The following is a 162-amino-acid chain: Lipid droplet assembly factor 1-A (162 aa).

Over 1–42 (MASAENLYQEKMQELQKQMNKVMQTINNHSKVEAFLNSPFGQ) the chain is Cytoplasmic. Residues 43-63 (YLDQHPFVTLSLLVFISLSAV) form a helical membrane-spanning segment. Residues 64–65 (PV) lie on the Lumenal side of the membrane. A helical membrane pass occupies residues 66-86 (GIFLTLIAGTAIAVCLAVLII). Glu87 is a topological domain (cytoplasmic). The helical transmembrane segment at 88–108 (GIVISVGGIALLCILCGLAVM) threads the bilayer. Residue Ser109 is a topological domain, lumenal. Residues 110–130 (LGVAAVLCVSYVAGSSVLNYI) traverse the membrane as a helical segment. The Cytoplasmic portion of the chain corresponds to 131–162 (HAYRVTVGTRGRSGPISLNHETTTAEKSYRSS).

This sequence belongs to the LDAF1 family.

The protein localises to the endoplasmic reticulum membrane. Its subcellular location is the lipid droplet. Its function is as follows. Plays an important role in the formation of lipid droplets (LD) which are storage organelles at the center of lipid and energy homeostasis. This chain is Lipid droplet assembly factor 1-A, found in Xenopus laevis (African clawed frog).